A 180-amino-acid polypeptide reads, in one-letter code: Large ribosomal subunit protein eL18 (180 aa).

Residues 152 to 180 (FGPAPGVPGSHTKPYVISKSRERTNAHRA) form a disordered region. Residues 170–180 (KSRERTNAHRA) show a composition bias toward basic and acidic residues.

The protein belongs to the eukaryotic ribosomal protein eL18 family.

Its subcellular location is the cytoplasm. This Taenia asiatica (Asian tapeworm) protein is Large ribosomal subunit protein eL18 (RPL18).